The chain runs to 34 residues: MSDIN-like toxin proprotein 5 (34 aa).

Positions 1–10 (MSDINTARLP) are excised as a propeptide. Residues 11-20 (YVVFMSFIPP) constitute a cross-link (cyclopeptide (Tyr-Pro)). The propeptide occupies 21–34 (CVNDDIQVVLTRGE).

The protein belongs to the MSDIN fungal toxin family. Processed by the macrocyclase-peptidase enzyme POPB to yield a toxic cyclic decapeptide. POPB first removes 10 residues from the N-terminus. Conformational trapping of the remaining peptide forces the enzyme to release this intermediate rather than proceed to macrocyclization. The enzyme rebinds the remaining peptide in a different conformation and catalyzes macrocyclization of the N-terminal 10 residues.

Functionally, probable toxin that belongs to the MSDIN-like toxin family responsible for a large number of food poisoning cases and deaths. The chain is MSDIN-like toxin proprotein 5 from Amanita bisporigera (Destroying angel).